We begin with the raw amino-acid sequence, 300 residues long: UPF0761 membrane protein Patl_3954 (300 aa).

The next 6 membrane-spanning stretches (helical) occupy residues 46 to 66 (LLSL…FPAF), 103 to 123 (MGAI…SNID), 138 to 158 (IIFT…LIGL), 184 to 204 (MLKI…YMIV), 214 to 234 (ALVG…GFSF), and 248 to 268 (AMAV…VVLL).

The protein belongs to the UPF0761 family.

It is found in the cell inner membrane. The chain is UPF0761 membrane protein Patl_3954 from Pseudoalteromonas atlantica (strain T6c / ATCC BAA-1087).